Here is a 360-residue protein sequence, read N- to C-terminus: Glucan endo-1,3-beta-glucosidase B (360 aa).

The N-terminal stretch at 1–25 is a signal peptide; that stretch reads MATSQIAIIVLLGLLVATNIHITEA. Position 26 is a pyrrolidone carboxylic acid (Gln-26). Residue Glu-120 is the Proton donor of the active site. Catalysis depends on Glu-265, which acts as the Nucleophile. A propeptide spans 341–360 (removed in mature form); that stretch reads VSERVWDITNSTASSLTSEI. Asn-350 is a glycosylation site (N-linked (GlcNAc...) asparagine).

This sequence belongs to the glycosyl hydrolase 17 family.

The protein localises to the vacuole. It catalyses the reaction Hydrolysis of (1-&gt;3)-beta-D-glucosidic linkages in (1-&gt;3)-beta-D-glucans.. Implicated in the defense of plants against pathogens. This is Glucan endo-1,3-beta-glucosidase B from Solanum lycopersicum (Tomato).